The primary structure comprises 399 residues: CCA-adding enzyme (399 aa).

Gly32 and Arg35 together coordinate ATP. CTP contacts are provided by Gly32 and Arg35. Mg(2+)-binding residues include Asp45 and Asp47. Positions 116, 159, 162, 165, and 168 each coordinate ATP. CTP contacts are provided by Arg116, Asp159, Arg162, Arg165, and Arg168.

The protein belongs to the tRNA nucleotidyltransferase/poly(A) polymerase family. Bacterial CCA-adding enzyme type 3 subfamily. In terms of assembly, homodimer. It depends on Mg(2+) as a cofactor.

It catalyses the reaction a tRNA precursor + 2 CTP + ATP = a tRNA with a 3' CCA end + 3 diphosphate. The catalysed reaction is a tRNA with a 3' CCA end + 2 CTP + ATP = a tRNA with a 3' CCACCA end + 3 diphosphate. In terms of biological role, catalyzes the addition and repair of the essential 3'-terminal CCA sequence in tRNAs without using a nucleic acid template. Adds these three nucleotides in the order of C, C, and A to the tRNA nucleotide-73, using CTP and ATP as substrates and producing inorganic pyrophosphate. tRNA 3'-terminal CCA addition is required both for tRNA processing and repair. Also involved in tRNA surveillance by mediating tandem CCA addition to generate a CCACCA at the 3' terminus of unstable tRNAs. While stable tRNAs receive only 3'-terminal CCA, unstable tRNAs are marked with CCACCA and rapidly degraded. The chain is CCA-adding enzyme from Streptococcus pneumoniae serotype 19F (strain G54).